A 386-amino-acid polypeptide reads, in one-letter code: Protein lin-8 (386 aa).

A sufficient for interaction with lin-35 region spans residues 175–285; the sequence is LGLEARRASK…FSQQYGGGGS (111 aa). Residues 212-240 form a disordered region; sequence EEPYEETGSNWSDPAPEPSQSKSQSPEAK. The span at 229–240 shows a compositional bias: low complexity; the sequence is PSQSKSQSPEAK.

The protein belongs to the lin-8 family. As to quaternary structure, interacts with lin-35 (via C-terminus). As to expression, widely expressed throughout development, with particularly prominent expression in the germline and in neuronal nuclei of the head (at protein level).

The protein localises to the nucleus. Functionally, acts as a synthetic multivulva class A (synMuvA) protein and redundantly inhibits lin-3/EGF expression to prevent inappropriate vulva induction. This chain is Protein lin-8, found in Caenorhabditis elegans.